The primary structure comprises 500 residues: Glycerol kinase (500 aa).

Residue T13 coordinates ADP. ATP contacts are provided by T13, T14, and S15. T13 contacts sn-glycerol 3-phosphate. ADP is bound at residue R17. The sn-glycerol 3-phosphate site is built by R83, E84, Y135, and D245. Residues R83, E84, Y135, D245, and Q246 each contribute to the glycerol site. ADP is bound by residues T267 and G310. ATP is bound by residues T267, G310, Q314, and G411. Positions 411 and 415 each coordinate ADP.

It belongs to the FGGY kinase family. As to quaternary structure, homotetramer and homodimer (in equilibrium).

The enzyme catalyses glycerol + ATP = sn-glycerol 3-phosphate + ADP + H(+). Its pathway is polyol metabolism; glycerol degradation via glycerol kinase pathway; sn-glycerol 3-phosphate from glycerol: step 1/1. Its activity is regulated as follows. Activated by phosphorylation and inhibited by fructose 1,6-bisphosphate (FBP). Its function is as follows. Key enzyme in the regulation of glycerol uptake and metabolism. Catalyzes the phosphorylation of glycerol to yield sn-glycerol 3-phosphate. The chain is Glycerol kinase from Lactobacillus acidophilus (strain ATCC 700396 / NCK56 / N2 / NCFM).